A 357-amino-acid polypeptide reads, in one-letter code: Scopoletin 8-hydroxylase (357 aa).

Residues 206 to 307 (MGTKMVNMNY…RVSVPIFTAP (102 aa)) form the Fe2OG dioxygenase domain. Position 216 (Tyr-216) interacts with 2-oxoglutarate. The Fe cation site is built by His-231, Asp-233, and His-288. Arg-298 and Ser-300 together coordinate 2-oxoglutarate.

Belongs to the iron/ascorbate-dependent oxidoreductase family. Requires L-ascorbate as cofactor. Fe(2+) is required as a cofactor. As to expression, expressed in both primary and lateral roots under iron-deficient conditions, except in apical root zones, and mostly in the root epidermal layer.

It catalyses the reaction scopoletin + 2-oxoglutarate + O2 = fraxetin + succinate + CO2. Its pathway is phenylpropanoid metabolism. Its function is as follows. Involved in the pathway of sideretin biosynthesis from feruloyl CoA, a redox-active catecholic metabolite exuded by roots in response to iron deficiency in order to facilitate the uptake of iron; this pathway consists in the successive conversion from feruloyl CoA to scopoletin, from scopoletin to fraxetin and from fraxetin to sideretin. Catalyzes the biosynthesis of fraxetin via scopoletin hydroxylation. The protein is Scopoletin 8-hydroxylase of Arabidopsis thaliana (Mouse-ear cress).